A 246-amino-acid polypeptide reads, in one-letter code: DNA polymerase sliding clamp (246 aa).

This sequence belongs to the PCNA family. As to quaternary structure, homotrimer. The subunits circularize to form a toroid; DNA passes through its center. Replication factor C (RFC) is required to load the toroid on the DNA.

In terms of biological role, sliding clamp subunit that acts as a moving platform for DNA processing. Responsible for tethering the catalytic subunit of DNA polymerase and other proteins to DNA during high-speed replication. This Methanocella arvoryzae (strain DSM 22066 / NBRC 105507 / MRE50) protein is DNA polymerase sliding clamp.